The following is a 147-amino-acid chain: uncharacterized protein (147 aa).

Residues 2–63 (LDELDKKIIG…KLNYENIGYD (62 aa)) form the HTH asnC-type domain. A DNA-binding region (H-T-H motif) is located at residues 21-40 (YREIAKELNVAVGTIYNRIK).

This is an uncharacterized protein from Pyrococcus abyssi (strain GE5 / Orsay).